The sequence spans 137 residues: Lysozyme (137 aa).

An N-terminal signal peptide occupies residues 1-20 (MQRLLGSIVILATVFTFCEA). Positions 21–135 (TISSACLRCI…EKVHQQGCNV (115 aa)) constitute an I-type lysozyme domain. 6 cysteine pairs are disulfide-bonded: Cys26–Cys102, Cys31–Cys37, Cys42–Cys51, Cys64–Cys84, Cys74–Cys80, and Cys98–Cys116. Glu34 acts as the Proton donor in catalysis. Catalysis depends on Asp45, which acts as the Nucleophile. 57–63 (KENYWED) contacts substrate. Residues Tyr88 and 109–111 (HNG) each bind substrate.

The protein belongs to the glycosyl hydrolase 22 family. Type-I lysozyme subfamily. Expressed in the basophil cells of the oyster digestive gland.

The protein localises to the secreted. It carries out the reaction Hydrolysis of (1-&gt;4)-beta-linkages between N-acetylmuramic acid and N-acetyl-D-glucosamine residues in a peptidoglycan and between N-acetyl-D-glucosamine residues in chitodextrins.. Its function is as follows. Has bacteriolytic activity. May play a role in digestion and in the host defense mechanisms against invading microbes. This is Lysozyme (lysoz) from Magallana gigas (Pacific oyster).